The chain runs to 3132 residues: MSLHTPSDGQQDPALASKTLCEQISRALGLGQDKIENIFPGTPFQRDVIDCAADDKQRAVGHAVFEIPKDIDAARLAAAWKETVLHTPALRTCTFTSKSGDVLQVVLRDSFVFSWMSGPSVDLKEAVVQDEAAAALAGPRCNRFVLLEDPDTKERQLIWTFSHALVDSTFQERILRRVLKAYKDANDEHPRQFETPDSSQATPEEDLQPNPSKMLKIPQAADMDRAVEFWKDHLSGLNASAFPHLSSHLSMPHPDAKAEHRISYSSSAQQKMSSATICRTALAILLSRYTHSPEALFGIVTEQTPLLEEQLMLDGPTRTVVPIRVSCASEQSVSDIMSTIDSYDQTMRQFAHAGLRNIASAGDDESAACGFQTVLLVSDGDAQPASTWEILKKTEEPEGFIPCTNRALLLSCQMTSSGAHLTARYDQSIIDAEQMARLLRQLGHLIQNLQTSTDLPVEKVDMMTQEDWLEIERWNSDSIDAQDTLIHSEMLKWTSQSPNKAAVAAWDGEWTYAELDNVSSRLAQHINSIDLGKEHAIVPIYFEKSKWVVASMLAVLKAGHAFTLIDPSDPPARTAQVVQQTSATVALTSKLHRETVQSTVGRCIVVDEEFVKSLPQSSELSASVKAHDLAYVIFTSGSTGIPKGIMIEHRSFSSCAIKFGPALGITSDTRALQFGSHAFGACILEIMTTLIHGGCVCIPSDDDRMNNVLEFINRTNVNWVMATPSYMGTFQPEVVPGLKTLVLVGEQMSASVNEVWAPRVQLLNGYGQSESSSICCVAKISPGSSEPNNIGHAVGAHSWIVDPEDPNRLAPIGAVGELVIESAGIARDYIVAPTQDKSPFIKTAPTWYPAKQLPDGFKIYRTGDLACYASDGSIVCLGRMDSQVKIRGQRVELGAVETHLRQQMPDDMTIVVEAVKFSDSSSTTVLTAFLIGAGEKNSHILDQRATREINAKMEQVLPRHSIPAFYISMNNLPQTATGKVDRRKLRIMGSKILSQKTHSTPSQQSQAAISSGTDTETKLESIWITSLDLEPGSANMSATFFEMGGNSIIAIKMVNMARSNGIELKVSDIYQNPTLAGLKAIVIGTSLPYSLIPKVTRQGPVSEQSYAQNRMWFLDQLSEGASWYLIPFAVRMRGPVDVDALTRALLALEQRHETLRTTFENQDGVGVQIIHDRLSKELQVIDALDGDEGGLKTLYKVETTTFDITSEAGWSSTLIRLGKDDHILSIVMHHIISDGWSIDVLRRELIQLYAAALQGKDPSSALTPLPIQYSDFAVWQKQEAQAAEHERQLQYWKKQLADSSPAKIPTDFPRPDLLSGDAGVVPVAIDGELYQKLRGFCNKHNSTAFSILLAAFRAAHYRLTAVDDAVIGIPIANRNRWELENMIGFFVNTQCMRIAVDETDTFESLVRQVRSTTTAAFAHEDVPFERVVSALQPGHRDLSRTPLAQIMFAVHSQKDLGRFELEGIQSEPIASKAYTRFDVEFHLFQQADGLKGSCNFATDLFKPETIQNVVSVFFQILRHGLDQPETCISVLPLTDGVEELRRLDLLEIKRTNYPRDSSVVDVFREQAAANPEVIAVTDSSSRLTYAELDNKSELLSRWLRRRNLTPETLVSVLAPRSCETIVAYVGILKANLAYLPLDVRSPVTRMKDILSSVSGNTIVLMGSGVEDPGFDLPQLELVRITDTFDETIEDVQDSPQPSATSLAYVVFTSGSTGKPKGVMIEHRAIVRLVKSDNFPGFPSPARMSNVFNPAFDGAIWEINWMLLNGGTVVCIDYLTTLDGKELAAVFAKERVNAAFFAPAMLKLYLVDAREALKNLDFLIVGGERFDTKEAVEAMPLVRGKIANIYGPTEAGIISTCYNIPKDEAYTNGVPIGGSIYNSGAYVMDPNQQLVGLGVMGELVVTGDGVGRGYTNPELNKNRFIDITIEGKTFKAYRTGDRMRARVGDGLLEFFGRMDNQFKIRGNRIEAGEVESAMLSLKNVLNAAIVVRGGGEDEGPLEMVGFIVADDKNDTTEEEETGNQVEGWQDHFESGMYSDISTAVDQSAIGNDFKGWTSMYDGKDIDKGEMQEWLDDAIHTLHNGQIPRDVLEIGTGSGMILFNLNPGLNSYVGLDPSKSAVEFVNRAVESSPKFAGKAKVHVGMATDVNKLGEVHPDLVVFNSVVQYFPTPEYLAEVIDGLIAIPSVKRIFLGDIRSYATNGHFLAARAIHTLGTNNNATKDRVRQKIQELEDREEEFLVEPAFFTTLKERRPDVVKHVEIIPKNMKATNELSAYRYTAVVHLRDETDEPVYHIEKDSWVDFEAKQMDKTALLDHLRLSKDAMSVAVSNITYAHTAFERRIVESLDEDSKDDTKGTLDGAAWLSAVRSEAENRASLTVPDILEIAKEAGFRVEVSAARQWSQSGALDAVFHHFPPSSTDRTLIQFPTDNELRSSLTLANRPLQKLQRRRAALQVREKLQTLVPSYMVPPNIVVLDTMPLNTNGKIDRKELTRRARTLPKQQTAAPVPDFPISDIEITLCEEATEVFGMKVEISDHFFQLGGHSLLATKLISRIQHRLHVRVTVKDVFDSPVFADLAVIIRQGLAMQNPVAEGQDKQGWSSRVAPRTEVEKMLCEEFAAGLGVPVGITDNFFDLGGHSLMATKLAVRIGRRLDTAITVKDIFDYPVLFQLAKKLESSHSKSYEESGDDIQMADYTAFQLLDLEDPQDFVQSQIRPQLDSCYGTIQDVYPSTQMQKAFLFDPTTGEPRGLVPFYIDFPSNADAETLTKAIGALVDKLDMFRTVFLEAAGDLYQVVVEHLNLPIETIETEKNVNTATGDYLDVHGKDPVRLGHPCIQFAILKTASSVRVLLRMSHALYDGLSFEYIVRGLHVLYSGRNLPPPTQFARYMQYAAHSREEGYPFWREVLQNAPMTVLHDTNNGMSEQEMPASKAVHLSEVVNVPAQAIRNSTNTQATVFNTACALVLAKESGSQDVVFGRIVSGRQGLPVVWQDIIGPCTNAVPVHARVDDGNPQRIIRDLRDQYLRTLPFESLGFEEIKRNCTDWPEELTNFSVCVTYHNFEYHPESEVDNQKVEMGVLAKYVELSENEPLYDLAIAGEVEADGVNLKVTVVAKARLYNEARIRHVLEEVCKTFNGLNEAL.

Positions 53–466 are condensation 1; that stretch reads ADDKQRAVGH…VEKVDMMTQE (414 aa). The disordered stretch occupies residues 186–212; that stretch reads NDEHPRQFETPDSSQATPEEDLQPNPS. The interval 495–887 is adenylation 1; the sequence is SQSPNKAAVA…GRMDSQVKIR (393 aa). The segment at 994–1013 is disordered; the sequence is SQKTHSTPSQQSQAAISSGT. Residues 1010-1086 form the Carrier 1 domain; sequence SSGTDTETKL…GLKAIVIGTS (77 aa). S1047 is subject to O-(pantetheine 4'-phosphoryl)serine. The interval 1105 to 1534 is condensation 2; the sequence is SYAQNRMWFL…ETCISVLPLT (430 aa). The adenylation 2 stretch occupies residues 1563 to 1960; it reads FREQAAANPE…GRMDNQFKIR (398 aa). The interval 2021 to 2177 is S-adenosyl-L-methionine-dependent N-methyltransferase; the sequence is EGWQDHFESG…YLAEVIDGLI (157 aa). Carrier domains follow at residues 2504 to 2578 and 2598 to 2672; these read FPIS…RQGL and APRT…ESSH. An O-(pantetheine 4'-phosphoryl)serine mark is found at S2538 and S2632. Residues 2719-3124 form a condensation 3 region; sequence QDVYPSTQMQ…RHVLEEVCKT (406 aa).

This sequence belongs to the NRP synthetase family. It depends on pantetheine 4'-phosphate as a cofactor.

The protein operates within antibiotic biosynthesis; enniatin biosynthesis. Its function is as follows. Nonribosomal peptide synthetase that synthesizes enniatin by coupling three D-hydroxycarboxylic acids and three L-amino acids via amide and ester bonds in an alternating fashion. Whereas ESYN1 can accept different amino acids as precursors (L-valine, L-isoleucine or L-leucine), only one species of D-hydroxycarboxylic acid can be found in natural enniatin isolates (D-hydroxyisovaleric acid, D-Hiv). D-Hiv stems from L-valine deanimation by a valine aminotransferase to 2-keto-isovaleric acid (2-Kiv), which becomes subsequently reduced by a keto-isovaleric acid reductase (KivR) to D-Hiv. This is Enniatin synthetase from Fusarium oxysporum (Fusarium vascular wilt).